Consider the following 116-residue polypeptide: Large ribosomal subunit protein bL19 (116 aa).

It belongs to the bacterial ribosomal protein bL19 family.

In terms of biological role, this protein is located at the 30S-50S ribosomal subunit interface and may play a role in the structure and function of the aminoacyl-tRNA binding site. The protein is Large ribosomal subunit protein bL19 of Staphylococcus haemolyticus (strain JCSC1435).